A 184-amino-acid chain; its full sequence is ADP-ribosylation factor-like protein 2 (184 aa).

A lipid anchor (N-myristoyl glycine) is attached at Gly-2. Residues 23-30 (GLDNAGKT), 66-70 (DVGGQ), Gly-68, and 125-128 (NKSD) each bind GTP.

The protein belongs to the small GTPase superfamily. Arf family.

The protein resides in the cytoplasm. It is found in the cell membrane. Its subcellular location is the cytoskeleton. It localises to the microtubule organizing center. The protein localises to the centrosome. GTP-binding protein that functions in embryogenesis, cytokinesis, germline development and microtubulule cytoskeleton dynamics. This is ADP-ribosylation factor-like protein 2 (evl-20.1) from Caenorhabditis briggsae.